The following is a 304-amino-acid chain: MKIGILSRNSKLYSTSRLVEAARERGHEPRVVDVLKCYMNITTNAPTVRYRSSGVSEELQFDAVIPRIGASVTTYGCAVLRQFEVSGVYSINESIAITRSRDKLRAHQLLARKGVGQPVTSYAHSADATNDLIESVNGAPLIVKVMASTHGNGVVLAETDKAAETLINAFRGLKADFLVQEFIKEAGGSDIRCFVIGDKVVAAMQRTAQPGEFRSNLHRGGSAQVVKLRPNERRLAVQAAQVMGLDLAGVDIIRSSHGPLVLEVNSSPGLKGIESATNKDIAGAIIDYIVKDVLNGPNKPKGKG.

The 184-residue stretch at 107–290 (HQLLARKGVG…IAGAIIDYIV (184 aa)) folds into the ATP-grasp domain. ATP contacts are provided by residues lysine 144, 181-182 (EF), aspartate 190, and 214-216 (RSN). Mg(2+) contacts are provided by aspartate 251, glutamate 263, and asparagine 265. Residues aspartate 251, glutamate 263, and asparagine 265 each coordinate Mn(2+).

The protein belongs to the RimK family. The cofactor is Mg(2+). It depends on Mn(2+) as a cofactor.

The chain is Probable alpha-L-glutamate ligase 2 from Hahella chejuensis (strain KCTC 2396).